The chain runs to 539 residues: Chaperonin GroEL (539 aa).

ATP-binding positions include 29-32 (TLGP), 86-90 (DGTTT), glycine 413, 476-478 (NAA), and aspartate 492.

This sequence belongs to the chaperonin (HSP60) family. As to quaternary structure, forms a cylinder of 14 subunits composed of two heptameric rings stacked back-to-back. Interacts with the co-chaperonin GroES.

It is found in the cytoplasm. The catalysed reaction is ATP + H2O + a folded polypeptide = ADP + phosphate + an unfolded polypeptide.. In terms of biological role, together with its co-chaperonin GroES, plays an essential role in assisting protein folding. The GroEL-GroES system forms a nano-cage that allows encapsulation of the non-native substrate proteins and provides a physical environment optimized to promote and accelerate protein folding. This is Chaperonin GroEL from Macrococcus caseolyticus (strain JCSC5402) (Macrococcoides caseolyticum).